The following is a 371-amino-acid chain: Cyclic AMP-responsive element-binding protein 3 (371 aa).

The transcription activation (acidic) stretch occupies residues 1-92 (MELELDAGDQ…LPRETVSMDL (92 aa)). Topologically, residues 1-230 (MELELDAGDQ…SNKTSSSSTC (230 aa)) are cytoplasmic. 2 consecutive short sequence motifs (LXXLL motif) follow at residues 13 to 17 (LAFLL) and 54 to 58 (LCSLL). The short motif at 78 to 81 (DHTY) is the HCFC1-binding-motif (HBM) element. The bZIP domain maps to 150–213 (ILKRVRRKIR…LSLLDQLRKL (64 aa)). Positions 152-184 (KRVRRKIRNKRSAQESRRKKKVYVGGLESRVLK) are basic motif. A leucine-zipper region spans residues 192-213 (LQNKVQLLEEQNLSLLDQLRKL). A helical; Signal-anchor for type II membrane protein transmembrane segment spans residues 231 to 247 (ILVLLVSFCLLLVPAMY). Topologically, residues 248–371 (SSDTRGSLPA…SVILQDRYSG (124 aa)) are lumenal. N-linked (GlcNAc...) asparagine glycans are attached at residues asparagine 307 and asparagine 348.

This sequence belongs to the bZIP family. ATF subfamily. In terms of assembly, homodimer. Isoform 1 interacts with HCFC1; the interaction is required to stimulate CREB3 transcriptional activity. Isoform 1 interacts with CREBZF; the interaction occurs only in combination with HCFC1. Isoform 1 interacts (via central part and transmembrane region) with DCSTAMP (via C-terminus cytoplasmic domain). Isoform 1 interacts with OS9. Isoform 1 interacts (via leucine-zipper domain) with CREBRF (via leucine-zipper domain); the interaction occurs only after CREB3 activation and promotes CREB3 degradation. Isoform 1 interacts (via C-terminal domain) with CCR1. (Microbial infection) Interacts with the HCV core protein; homodimerization is prevented by the HCV core protein. Isoform 1 interacts (via leucine-zipper and transmembrane domains) with HIV-1 TMgp41 (via cytoplasmic domain); the interaction reduces CREB3 stability. Processed cyclic AMP-responsive element-binding protein 3 interacts with HIV-1 Tat. Post-translationally, first proteolytically cleaved by site-1 protease (S1P) that generates membrane-associated N-terminus and a luminal C-terminus forms. The membrane-associated N-terminus form is further proteolytically processed probably by the site-2 protease (S2P) through a regulated intramembrane proteolysis (RIP), releasing the transcriptional active processed cyclic AMP-responsive element-binding protein 3 form, which is transported to the nucleus. The proteolytic cleavage is strongly induced during dendritic cell (DC) maturation and inhibited by DCSTAMP. That form is rapidly degraded. N-glycosylated. As to expression, ubiquitously expressed. Expressed in dendritic cells (DC). Weakly expressed in monocytes (at protein level).

Its subcellular location is the endoplasmic reticulum membrane. The protein localises to the golgi apparatus. The protein resides in the cytoplasm. It is found in the nucleus. In terms of biological role, endoplasmic reticulum (ER)-bound sequence-specific transcription factor that directly binds DNA and activates transcription. Plays a role in the unfolded protein response (UPR), promoting cell survival versus ER stress-induced apoptotic cell death. Also involved in cell proliferation, migration and differentiation, tumor suppression and inflammatory gene expression. Acts as a positive regulator of LKN-1/CCL15-induced chemotaxis signaling of leukocyte cell migration. Associates with chromatin to the HERPUD1 promoter. Also induces transcriptional activation of chemokine receptors. Its function is as follows. (Microbial infection) Plays a role in human immunodeficiency virus type 1 (HIV-1) virus protein expression. Functionally, (Microbial infection) May play a role as a cellular tumor suppressor that is targeted by the hepatitis C virus (HCV) core protein. (Microbial infection) Plays a role in herpes simplex virus-1 (HSV-1) latent infection and reactivation from latency. Represses the VP16-mediated transactivation of immediate early genes of the HSV-1 virus by sequestering host cell factor-1 HCFC1 in the ER membrane of sensory neurons, thereby preventing the initiation of the replicative cascade leading to latent infection. In terms of biological role, functions as a negative transcriptional regulator in ligand-induced transcriptional activation of the glucocorticoid receptor NR3C1 by recruiting and activating histone deacetylases (HDAC1, HDAC2 and HDAC6). Also decreases the acetylation level of histone H4. Does not promote the chemotactic activity of leukocyte cells. Its function is as follows. This is the transcriptionally active form that translocates to the nucleus and activates unfolded protein response (UPR) target genes during endoplasmic reticulum (ER) stress response. Binds the cAMP response element (CRE) (consensus: 5'-GTGACGT[AG][AG]-3') and C/EBP sequences present in many promoters to activate transcription of the genes. Binds to the unfolded protein response element (UPRE) consensus sequences sites. Binds DNA to the 5'-CCAC[GA]-3'half of ERSE II (5'-ATTGG-N-CCACG-3'). Functionally, (Microbial infection) Activates transcription of genes required for reactivation of the latent HSV-1 virus. It's transcriptional activity is inhibited by CREBZF in a HCFC1-dependent manner, by the viral transactivator protein VP16. Binds DNA to the cAMP response element (CRE) (consensus: 5'-GTGACGT[AG][AG]-3') and C/EBP sequences present in many viral promoters. (Microbial infection) It's transcriptional activity is inhibited by CREBZF in a HCFC1-dependent manner, by the viral transactivator HCV core protein. This chain is Cyclic AMP-responsive element-binding protein 3 (CREB3), found in Homo sapiens (Human).